The sequence spans 452 residues: Maltoporin (452 aa).

The N-terminal stretch at 1–25 (MMITLRKLPLAVAVAAGVMSAQAMA) is a signal peptide.

It belongs to the porin LamB (TC 1.B.3) family. In terms of assembly, homotrimer formed of three 18-stranded antiparallel beta-barrels, containing three independent channels.

It is found in the cell outer membrane. The catalysed reaction is beta-maltose(in) = beta-maltose(out). In terms of biological role, involved in the transport of maltose and maltodextrins. The sequence is that of Maltoporin from Salmonella enteritidis PT4 (strain P125109).